Here is a 205-residue protein sequence, read N- to C-terminus: Small ribosomal subunit protein uS4 (205 aa).

The disordered stretch occupies residues 18-49; it reads NIWGRPKSPVNKREYGPGQHGQRRKGKLSDFG. Positions 94 to 157 constitute an S4 RNA-binding domain; sequence RRLDTVVYRA…KQLALVLEAN (64 aa).

Belongs to the universal ribosomal protein uS4 family. As to quaternary structure, part of the 30S ribosomal subunit. Contacts protein S5. The interaction surface between S4 and S5 is involved in control of translational fidelity.

Functionally, one of the primary rRNA binding proteins, it binds directly to 16S rRNA where it nucleates assembly of the body of the 30S subunit. With S5 and S12 plays an important role in translational accuracy. This is Small ribosomal subunit protein uS4 from Nitrobacter winogradskyi (strain ATCC 25391 / DSM 10237 / CIP 104748 / NCIMB 11846 / Nb-255).